The primary structure comprises 334 residues: tRNA N6-adenosine threonylcarbamoyltransferase (334 aa).

Positions 112 and 116 each coordinate Fe cation. Substrate is bound by residues 135 to 139 (VVSGG), D168, G181, D185, and N274. D303 lines the Fe cation pocket.

The protein belongs to the KAE1 / TsaD family. Fe(2+) is required as a cofactor.

The protein localises to the cytoplasm. It catalyses the reaction L-threonylcarbamoyladenylate + adenosine(37) in tRNA = N(6)-L-threonylcarbamoyladenosine(37) in tRNA + AMP + H(+). Required for the formation of a threonylcarbamoyl group on adenosine at position 37 (t(6)A37) in tRNAs that read codons beginning with adenine. Is involved in the transfer of the threonylcarbamoyl moiety of threonylcarbamoyl-AMP (TC-AMP) to the N6 group of A37, together with TsaE and TsaB. TsaD likely plays a direct catalytic role in this reaction. In Anaeromyxobacter dehalogenans (strain 2CP-1 / ATCC BAA-258), this protein is tRNA N6-adenosine threonylcarbamoyltransferase.